Reading from the N-terminus, the 599-residue chain is Elongation factor 4 (599 aa).

The 183-residue stretch at 2-184 (KNIRNFSIIA…RLVRDIPPPE (183 aa)) folds into the tr-type G domain. GTP is bound by residues 14–19 (DHGKST) and 131–134 (NKID).

This sequence belongs to the TRAFAC class translation factor GTPase superfamily. Classic translation factor GTPase family. LepA subfamily.

It is found in the cell inner membrane. The enzyme catalyses GTP + H2O = GDP + phosphate + H(+). Functionally, required for accurate and efficient protein synthesis under certain stress conditions. May act as a fidelity factor of the translation reaction, by catalyzing a one-codon backward translocation of tRNAs on improperly translocated ribosomes. Back-translocation proceeds from a post-translocation (POST) complex to a pre-translocation (PRE) complex, thus giving elongation factor G a second chance to translocate the tRNAs correctly. Binds to ribosomes in a GTP-dependent manner. In Klebsiella pneumoniae (strain 342), this protein is Elongation factor 4.